A 436-amino-acid chain; its full sequence is GTPase Der (436 aa).

2 consecutive EngA-type G domains span residues 4 to 167 (PVVA…KNLP) and 176 to 351 (VQFC…ENHA). Residues 10–17 (GRPNVGKS), 57–61 (DTGGI), 119–122 (NKLD), 182–189 (GRPNVGKS), 229–233 (DTAGM), and 294–297 (NKWD) each bind GTP. In terms of domain architecture, KH-like spans 352 to 436 (MRVQTNILND…PIKIFARARK (85 aa)).

This sequence belongs to the TRAFAC class TrmE-Era-EngA-EngB-Septin-like GTPase superfamily. EngA (Der) GTPase family. In terms of assembly, associates with the 50S ribosomal subunit.

GTPase that plays an essential role in the late steps of ribosome biogenesis. This chain is GTPase Der, found in Bacillus pumilus (strain SAFR-032).